A 445-amino-acid polypeptide reads, in one-letter code: Argininosuccinate synthase (445 aa).

ATP contacts are provided by residues 17-25 (AFSGGLDTS) and alanine 43. Tyrosine 99 contributes to the L-citrulline binding site. ATP contacts are provided by glycine 129 and threonine 131. Residues threonine 131, asparagine 135, and aspartate 136 each coordinate L-aspartate. Asparagine 135 provides a ligand contact to L-citrulline. Aspartate 136 serves as a coordination point for ATP. Arginine 139 and serine 192 together coordinate L-citrulline. Position 194 (aspartate 194) interacts with ATP. 3 residues coordinate L-citrulline: threonine 201, glutamate 203, and glutamate 280.

This sequence belongs to the argininosuccinate synthase family. Type 2 subfamily. In terms of assembly, homotetramer.

It is found in the cytoplasm. The catalysed reaction is L-citrulline + L-aspartate + ATP = 2-(N(omega)-L-arginino)succinate + AMP + diphosphate + H(+). The protein operates within amino-acid biosynthesis; L-arginine biosynthesis; L-arginine from L-ornithine and carbamoyl phosphate: step 2/3. The polypeptide is Argininosuccinate synthase (Rhodopseudomonas palustris (strain ATCC BAA-98 / CGA009)).